Reading from the N-terminus, the 423-residue chain is Serine hydroxymethyltransferase (423 aa).

(6S)-5,6,7,8-tetrahydrofolate is bound by residues Leu-120 and 124-126 (GHL). An N6-(pyridoxal phosphate)lysine modification is found at Lys-229. 353-355 (SPF) lines the (6S)-5,6,7,8-tetrahydrofolate pocket.

This sequence belongs to the SHMT family. As to quaternary structure, homodimer. Pyridoxal 5'-phosphate is required as a cofactor.

Its subcellular location is the cytoplasm. It carries out the reaction (6R)-5,10-methylene-5,6,7,8-tetrahydrofolate + glycine + H2O = (6S)-5,6,7,8-tetrahydrofolate + L-serine. It functions in the pathway one-carbon metabolism; tetrahydrofolate interconversion. Its pathway is amino-acid biosynthesis; glycine biosynthesis; glycine from L-serine: step 1/1. In terms of biological role, catalyzes the reversible interconversion of serine and glycine with tetrahydrofolate (THF) serving as the one-carbon carrier. This reaction serves as the major source of one-carbon groups required for the biosynthesis of purines, thymidylate, methionine, and other important biomolecules. Also exhibits THF-independent aldolase activity toward beta-hydroxyamino acids, producing glycine and aldehydes, via a retro-aldol mechanism. The polypeptide is Serine hydroxymethyltransferase (Prochlorococcus marinus (strain AS9601)).